The sequence spans 257 residues: 1-acyl-sn-glycerol-3-phosphate acyltransferase (257 aa).

A helical membrane pass occupies residues 10–30 (VLFYLLLSASAFVWGTLSFFI). The HXXXXD motif signature appears at 82 to 87 (HQSTWE). The chain crosses the membrane as a helical span at residues 105 to 125 (ELLYVPFFGWALALLKPIAID).

Belongs to the 1-acyl-sn-glycerol-3-phosphate acyltransferase family.

It localises to the cell inner membrane. The enzyme catalyses a 1-acyl-sn-glycero-3-phosphate + an acyl-CoA = a 1,2-diacyl-sn-glycero-3-phosphate + CoA. The protein operates within phospholipid metabolism; CDP-diacylglycerol biosynthesis; CDP-diacylglycerol from sn-glycerol 3-phosphate: step 2/3. In terms of biological role, converts lysophosphatidic acid (LPA) into phosphatidic acid by incorporating acyl moiety at the 2 position. This is 1-acyl-sn-glycerol-3-phosphate acyltransferase from Pseudomonas aeruginosa (strain ATCC 15692 / DSM 22644 / CIP 104116 / JCM 14847 / LMG 12228 / 1C / PRS 101 / PAO1).